The chain runs to 147 residues: Large ribosomal subunit protein uL13 (147 aa).

It belongs to the universal ribosomal protein uL13 family. As to quaternary structure, part of the 50S ribosomal subunit.

This protein is one of the early assembly proteins of the 50S ribosomal subunit, although it is not seen to bind rRNA by itself. It is important during the early stages of 50S assembly. In Renibacterium salmoninarum (strain ATCC 33209 / DSM 20767 / JCM 11484 / NBRC 15589 / NCIMB 2235), this protein is Large ribosomal subunit protein uL13.